The sequence spans 184 residues: uncharacterized protein (184 aa).

The protein belongs to the TorD/DmsD family.

This is an uncharacterized protein from Haemophilus influenzae (strain ATCC 51907 / DSM 11121 / KW20 / Rd).